The following is a 153-amino-acid chain: Small ribosomal subunit protein uS19 (153 aa).

The protein belongs to the universal ribosomal protein uS19 family.

This chain is Small ribosomal subunit protein uS19 (RPS15), found in Elaeis oleifera (American oil palm).